Here is a 729-residue protein sequence, read N- to C-terminus: Neurochondrin (729 aa).

Ser2 is subject to N-acetylserine. Position 2 is a phosphoserine (Ser2). 2 S-palmitoyl cysteine lipidation sites follow: Cys3 and Cys4. Arg75 is modified (asymmetric dimethylarginine). A Phosphoserine modification is found at Ser448.

This sequence belongs to the neurochondrin family. As to quaternary structure, interacts with MCHR1. Interacts with SEMA4C. Interacts with DIAPH1 (via FH3 domain). Interacts with GRM5. Post-translationally, palmitoylated. Palmitoylation by ZDHHC1, ZDHHC3 and ZDHHC11 regulates the association of NCDN with endosome membranes. May also be palmitoylated by ZDHHC7. Expressed in the neuronal, chondral and bone tissues. Expressed in dendrites. Enriched in the brain in the surface layer I-IV. In brains, protein level increases in male but decreases in female with advancing age (at protein level). In adult brains, it is highly expressed in the forebrain and hindbrain. Highly expressed in the hippocampus, piriform cortex, septum, amygdaloid complex, medial geniculate nucleus, inferior colliculus, cerebellar nuclei and the nuclei of the Vth, VIIth, and XIIth cranial nerves. In bone tissues, it is expressed in osteoblasts and osteocytes.

The protein resides in the cytoplasm. It localises to the cytosol. It is found in the endosome membrane. The protein localises to the cell projection. Its subcellular location is the dendrite. The protein resides in the postsynapse. Functionally, probably involved in signal transduction, in the nervous system, via increasing cell surface localization of GRM5 and positively regulating its signaling. Required for the spatial learning process. Acts as a negative regulator of Ca(2+)-calmodulin-dependent protein kinase 2 (CaMK2) phosphorylation. May play a role in modulating melanin-concentrating hormone-mediated functions via its interaction with MCHR1 that interferes with G protein-coupled signal transduction. May be involved in bone metabolism. May also be involved in neurite outgrowth. This chain is Neurochondrin (Ncdn), found in Mus musculus (Mouse).